Here is a 291-residue protein sequence, read N- to C-terminus: Mitochondrial citrate transporter B (291 aa).

Solcar repeat units follow at residues 10-97 (PQKW…IKNS), 105-193 (LSPA…LKES), and 201-283 (PTLF…MTYL). 6 helical membrane passes run 16-36 (LIAGGVAGGVEAASTYPFEYA), 74-94 (STLIIGTTAKAAVRFVSYDTI), 112-132 (VAGVVAGATESVLAVTPTERI), 172-192 (TTLKQSATSAVRMGTYNILKE), 203-220 (LFTTFCMGALAGVVTVYA), and 255-276 (FWKGSSMRLGRLLLSGGIVFSV).

The protein belongs to the mitochondrial carrier (TC 2.A.29) family.

The protein resides in the mitochondrion inner membrane. The catalysed reaction is citrate(in) + H(+)(in) = citrate(out) + H(+)(out). Its function is as follows. Mitochondrial transporter that mediates citrate export from mitochondria to cytoplasm. Both ctpA, ctpB, and ctpD play important roles in citric acid transport across the mitochondrial membrane and function in a redundant manner. The protein is Mitochondrial citrate transporter B of Aspergillus niger (strain ATCC 1015 / CBS 113.46 / FGSC A1144 / LSHB Ac4 / NCTC 3858a / NRRL 328 / USDA 3528.7).